Consider the following 819-residue polypeptide: NEDD4-binding protein 1 (819 aa).

Polar residues predominate over residues methionine 1–glycine 13. The segment at methionine 1–valine 20 is disordered. The KH-like domain maps to lysine 80 to aspartate 164. The segment covering aspartate 226–arginine 241 has biased composition (basic and acidic residues). 2 disordered regions span residues aspartate 226–proline 247 and lysine 666–arginine 736. The RNase NYN domain maps to leucine 517–aspartate 669. Polar residues predominate over residues lysine 673 to glutamate 689. Residues arginine 772–aspartate 819 form a coCUN region.

The protein belongs to the N4BP1 family.

The protein resides in the cytoplasm. It localises to the cytosol. The protein localises to the nucleus. It is found in the nucleolus. Its subcellular location is the PML body. In terms of biological role, potent suppressor of cytokine production that acts as a regulator of innate immune signaling and inflammation. Acts as a key negative regulator of select cytokine and chemokine responses elicited by TRIF-independent Toll-like receptors (TLRs), thereby limiting inflammatory cytokine responses to minor insults. Has ribonuclease activity. This is NEDD4-binding protein 1 from Xenopus tropicalis (Western clawed frog).